The following is a 160-amino-acid chain: Small ribosomal subunit protein uS7 (160 aa).

This sequence belongs to the universal ribosomal protein uS7 family. Part of the 30S ribosomal subunit. Contacts proteins S9 and S11.

One of the primary rRNA binding proteins, it binds directly to 16S rRNA where it nucleates assembly of the head domain of the 30S subunit. Is located at the subunit interface close to the decoding center, probably blocks exit of the E-site tRNA. The polypeptide is Small ribosomal subunit protein uS7 (Ehrlichia canis (strain Jake)).